A 300-amino-acid polypeptide reads, in one-letter code: tRNA-cytidine(32) 2-sulfurtransferase (300 aa).

A PP-loop motif motif is present at residues 57–62; sequence SGGKDS. 3 residues coordinate [4Fe-4S] cluster: Cys132, Cys135, and Cys223.

This sequence belongs to the TtcA family. As to quaternary structure, homodimer. The cofactor is Mg(2+). [4Fe-4S] cluster serves as cofactor.

Its subcellular location is the cytoplasm. It carries out the reaction cytidine(32) in tRNA + S-sulfanyl-L-cysteinyl-[cysteine desulfurase] + AH2 + ATP = 2-thiocytidine(32) in tRNA + L-cysteinyl-[cysteine desulfurase] + A + AMP + diphosphate + H(+). It participates in tRNA modification. Catalyzes the ATP-dependent 2-thiolation of cytidine in position 32 of tRNA, to form 2-thiocytidine (s(2)C32). The sulfur atoms are provided by the cysteine/cysteine desulfurase (IscS) system. This chain is tRNA-cytidine(32) 2-sulfurtransferase, found in Xanthomonas campestris pv. campestris (strain 8004).